The primary structure comprises 1021 residues: PDZ domain-containing protein 7 (1021 aa).

2 PDZ domains span residues 86-156 (AVRV…LTSS) and 210-279 (IVHL…EVLK). The segment covering 324 to 344 (SSSSVSSYASSAPCSSGSLPS) has biased composition (low complexity). 3 disordered regions span residues 324 to 345 (SSSS…LPSD), 431 to 495 (ITRS…DSRS), and 724 to 814 (RRGA…HRPR). Residues 729 to 744 (APPPQPPPVAPRPPRP) show a composition bias toward pro residues. A compositionally biased stretch (polar residues) spans 758–767 (QQNQSQTPAQ). Residues 772-794 (SRSRSRSRSHSRGQGKSPGRRRS) are compositionally biased toward basic residues. A compositionally biased stretch (low complexity) spans 799 to 808 (PIATAATANG). The region spanning 858-930 (TITLSKMKQS…QRAVDTIRRA (73 aa)) is the PDZ 3 domain. The interval 992-1021 (QLQQSLSSALKVPQSIPKLSPILKDPHDPS) is disordered.

Homodimerizes (via PDZ2 domain). Component of USH2 complex, composed of ADGRV1, PDZD7, USH2A and WHRN. Interacts (via PDZ domains) with WHRN; the interaction is direct. Interacts with USH1G. Interacts with ADGRV1 (via the cytoplasmic region). Interacts with USH2A (via the cytoplasmic region). Interacts with MYO7A (via MyTH4-FERM domains). Isoform 1 is expressed in developing and adult cochlea but not retina. Isoform 2 is expressed in developing and adult cochlea and retina. Isoform 3 is expressed in adult cochlea and retina. Isoform 4 is expressed in retina and developing cochlea but not adult cochlea. Isoform 5 is expressed in adult cochlea but not in developing cochlea or retina.

It is found in the cell projection. Its subcellular location is the cilium. The protein localises to the nucleus. It localises to the stereocilium. Its function is as follows. In cochlear developing hair cells, essential in organizing the USH2 complex at stereocilia ankle links. Blocks inhibition of adenylate cyclase activity mediated by ADGRV1. The chain is PDZ domain-containing protein 7 from Mus musculus (Mouse).